The following is an 81-amino-acid chain: Short neurotoxin 2 (81 aa).

An N-terminal signal peptide occupies residues 1 to 21; sequence MKTLLLTLVVVTIVCLDLGYT. Intrachain disulfides connect C24/C43, C38/C60, C62/C73, and C74/C79.

This sequence belongs to the three-finger toxin family. Short-chain subfamily. Type I alpha-neurotoxin sub-subfamily. As to expression, expressed by the venom gland.

It is found in the secreted. In terms of biological role, binds to muscle nicotinic acetylcholine receptor (nAChR) and inhibit acetylcholine from binding to the receptor, thereby impairing neuromuscular transmission. This is Short neurotoxin 2 from Cryptophis nigrescens (Eastern small-eyed snake).